A 771-amino-acid chain; its full sequence is Transducin-like enhancer protein 3-B (771 aa).

Positions 1 to 141 (MYPQGRHPAP…PLTQQQLQAQ (141 aa)) are q domain. Residues 137-148 (QLQAQHLSHAAH) are compositionally biased toward low complexity. Disordered regions lie at residues 137 to 174 (QLQA…GSGS) and 196 to 360 (HHDL…MEAL). The tract at residues 142–209 (HLSHAAHGPP…EHRERESSTN (68 aa)) is GP domain. The segment covering 196 to 206 (HHDLEHRERES) has biased composition (basic and acidic residues). Residues 207–217 (STNNSVSPSDS) are compositionally biased toward low complexity. The tract at residues 210-278 (NSVSPSDSLR…TPRVSPSHSP (69 aa)) is ccN domain. 2 stretches are compositionally biased toward basic and acidic residues: residues 219 to 257 (RASE…KSDD) and 282 to 293 (GLDKARALKKDA). The Nuclear localization signal signature appears at 235 to 238 (KKRR). The SP domain stretch occupies residues 279–451 (PENGLDKARA…GGKPAYSFHV (173 aa)). Residues 294–309 (PNSPASVASSGSTPSS) show a composition bias toward low complexity. 2 positions are modified to phosphoserine: Ser296 and Ser299. The span at 310–319 (KAKDHPHNDK) shows a compositional bias: basic and acidic residues. The span at 320–332 (SSTPGLKSNTPTP) shows a compositional bias: polar residues. 7 WD repeats span residues 483–521 (SHGE…SKSP), 529–568 (NRDN…PRIK), 573–612 (SSAP…LVRQ), 615–654 (GHTD…QLQQ), 656–695 (DFTS…KYQL), 697–736 (LHES…SIFQ), and 738–771 (KESS…EVIY).

This sequence belongs to the WD repeat Groucho/TLE family. As to expression, at gastrulation, expression is absent within the axial mesoderm. After gastrulation is complete, expressed in the presomitic mesoderm, but expression in the tailbud doesn't begin until the six to seven somite stage, after which it becomes abundant. Expression is abundant throughout somitogenesis within the posterior half of the somites, but is absent from older somites. Also expressed in a dynamic manner within the neural plate.

The protein resides in the nucleus. Functionally, transcriptional corepressor that binds to a number of transcription factors. Inhibits the transcriptional activation mediated by CTNNB1 and TCF family members in Wnt signaling. The effects of full-length TLE family members may be modulated by association with dominant-negative AES. This is Transducin-like enhancer protein 3-B from Danio rerio (Zebrafish).